The sequence spans 126 residues: Fluoride-specific ion channel FluC 1 (126 aa).

4 helical membrane passes run 5 to 25 (FILAVAAGGSLGSVARYLVGI), 39 to 59 (TLFINITGSLLIGLFAGLFAI), 69 to 89 (IFLIVGICGGYTTFSTFSLDS), and 100 to 120 (AAGAYMIASVVLSVGALIAGI). The Na(+) site is built by Gly-77 and Thr-80.

This sequence belongs to the fluoride channel Fluc/FEX (TC 1.A.43) family.

It is found in the cell inner membrane. It catalyses the reaction fluoride(in) = fluoride(out). Na(+) is not transported, but it plays an essential structural role and its presence is essential for fluoride channel function. Its function is as follows. Fluoride-specific ion channel. Important for reducing fluoride concentration in the cell, thus reducing its toxicity. In Nitrobacter hamburgensis (strain DSM 10229 / NCIMB 13809 / X14), this protein is Fluoride-specific ion channel FluC 1.